We begin with the raw amino-acid sequence, 119 residues long: Large ribosomal subunit protein uL18 (119 aa).

Belongs to the universal ribosomal protein uL18 family. In terms of assembly, part of the 50S ribosomal subunit; part of the 5S rRNA/L5/L18/L25 subcomplex. Contacts the 5S and 23S rRNAs.

This is one of the proteins that bind and probably mediate the attachment of the 5S RNA into the large ribosomal subunit, where it forms part of the central protuberance. This chain is Large ribosomal subunit protein uL18, found in Anaeromyxobacter dehalogenans (strain 2CP-1 / ATCC BAA-258).